The chain runs to 124 residues: Acidic phospholipase A2 (124 aa).

Disulfide bonds link C26/C117, C28/C44, C43/C97, C49/C124, C50/C90, C57/C83, and C77/C88. 3 residues coordinate Ca(2+): Y27, G29, and G31. The active site involves H47. D48 contacts Ca(2+). The active site involves E89.

This sequence belongs to the phospholipase A2 family. Group II subfamily. D49 sub-subfamily. The cofactor is Ca(2+). As to expression, expressed by the venom gland.

The protein resides in the secreted. It carries out the reaction a 1,2-diacyl-sn-glycero-3-phosphocholine + H2O = a 1-acyl-sn-glycero-3-phosphocholine + a fatty acid + H(+). In terms of biological role, snake venom phospholipase A2 (PLA2) that inhibits collagen- and ADP-induced platelet aggregation. PLA2 catalyzes the calcium-dependent hydrolysis of the 2-acyl groups in 3-sn-phosphoglycerides. The sequence is that of Acidic phospholipase A2 from Bothrops jararaca (Jararaca).